A 467-amino-acid chain; its full sequence is Glutamate--tRNA ligase (467 aa).

A 'HIGH' region motif is present at residues 9-19 (PSPTGFLHIGG). Residues 241-245 (KLSKR) carry the 'KMSKS' region motif. K244 provides a ligand contact to ATP.

It belongs to the class-I aminoacyl-tRNA synthetase family. Glutamate--tRNA ligase type 1 subfamily. As to quaternary structure, monomer.

The protein resides in the cytoplasm. It catalyses the reaction tRNA(Glu) + L-glutamate + ATP = L-glutamyl-tRNA(Glu) + AMP + diphosphate. In terms of biological role, catalyzes the attachment of glutamate to tRNA(Glu) in a two-step reaction: glutamate is first activated by ATP to form Glu-AMP and then transferred to the acceptor end of tRNA(Glu). This chain is Glutamate--tRNA ligase, found in Methylobacillus flagellatus (strain ATCC 51484 / DSM 6875 / VKM B-1610 / KT).